A 383-amino-acid polypeptide reads, in one-letter code: Protein KES1 (383 aa).

Residues 317–339 (FETASKDKARIENAQRQKRKDEA) show a composition bias toward basic and acidic residues. Residues 317-346 (FETASKDKARIENAQRQKRKDEAAAGTPHQ) are disordered.

This sequence belongs to the OSBP family.

Functionally, lipid transporter involved in lipid countertransport between the Golgi complex and membranes of the endoplasmic reticulum: specifically exchanges sterol with phosphatidylinositol 4-phosphate (PI4P), delivering sterol to the Golgi in exchange for PI4P, which is degraded by the SAC1 phosphatase in the endoplasmic reticulum. This is Protein KES1 (KES1) from Mycosarcoma maydis (Corn smut fungus).